The chain runs to 348 residues: Heat-inducible transcription repressor HrcA (348 aa).

It belongs to the HrcA family.

Negative regulator of class I heat shock genes (grpE-dnaK-dnaJ and groELS operons). Prevents heat-shock induction of these operons. The protein is Heat-inducible transcription repressor HrcA of Pelotomaculum thermopropionicum (strain DSM 13744 / JCM 10971 / SI).